A 268-amino-acid polypeptide reads, in one-letter code: Ribosomal RNA small subunit methyltransferase A (268 aa).

The S-adenosyl-L-methionine site is built by Asn16, Leu18, Gly43, Glu64, Asp89, and Asn110.

Belongs to the class I-like SAM-binding methyltransferase superfamily. rRNA adenine N(6)-methyltransferase family. RsmA subfamily.

The protein resides in the cytoplasm. The enzyme catalyses adenosine(1518)/adenosine(1519) in 16S rRNA + 4 S-adenosyl-L-methionine = N(6)-dimethyladenosine(1518)/N(6)-dimethyladenosine(1519) in 16S rRNA + 4 S-adenosyl-L-homocysteine + 4 H(+). In terms of biological role, specifically dimethylates two adjacent adenosines (A1518 and A1519) in the loop of a conserved hairpin near the 3'-end of 16S rRNA in the 30S particle. May play a critical role in biogenesis of 30S subunits. The sequence is that of Ribosomal RNA small subunit methyltransferase A from Pseudomonas savastanoi pv. phaseolicola (strain 1448A / Race 6) (Pseudomonas syringae pv. phaseolicola (strain 1448A / Race 6)).